The sequence spans 786 residues: Endonuclease MutS2 (786 aa).

333-340 (GPNTGGKT) is a binding site for ATP. A disordered region spans residues 682-709 (EKIKPSKQSAAQRPVVKVSGGGMSGPST). Residues 711–786 (LDLRGERYDQ…GSGATIVNFK (76 aa)) enclose the Smr domain.

Belongs to the DNA mismatch repair MutS family. MutS2 subfamily. In terms of assembly, homodimer. Binds to stalled ribosomes, contacting rRNA.

Functionally, endonuclease that is involved in the suppression of homologous recombination and thus may have a key role in the control of bacterial genetic diversity. Its function is as follows. Acts as a ribosome collision sensor, splitting the ribosome into its 2 subunits. Detects stalled/collided 70S ribosomes which it binds and splits by an ATP-hydrolysis driven conformational change. Acts upstream of the ribosome quality control system (RQC), a ribosome-associated complex that mediates the extraction of incompletely synthesized nascent chains from stalled ribosomes and their subsequent degradation. Probably generates substrates for RQC. This Lacticaseibacillus casei (strain BL23) (Lactobacillus casei) protein is Endonuclease MutS2.